A 361-amino-acid polypeptide reads, in one-letter code: Phospho-N-acetylmuramoyl-pentapeptide-transferase (361 aa).

The next 11 helical transmembrane spans lie at 10-30, 40-60, 84-104, 107-127, 147-167, 175-195, 206-226, 232-252, 260-280, 288-308, and 341-361; these read PGTG…ACLI, LSLP…IGVP, GTPT…GSLV, GDPR…IGGI, LLLQ…HGAI, WGWL…VFLA, LDGL…LQLM, GDPA…GFLL, VFMG…IALL, LLMG…VWVF, and VVVS…VLVP.

Belongs to the glycosyltransferase 4 family. MraY subfamily. Mg(2+) serves as cofactor.

It is found in the cell inner membrane. The catalysed reaction is UDP-N-acetyl-alpha-D-muramoyl-L-alanyl-gamma-D-glutamyl-meso-2,6-diaminopimeloyl-D-alanyl-D-alanine + di-trans,octa-cis-undecaprenyl phosphate = di-trans,octa-cis-undecaprenyl diphospho-N-acetyl-alpha-D-muramoyl-L-alanyl-D-glutamyl-meso-2,6-diaminopimeloyl-D-alanyl-D-alanine + UMP. Its pathway is cell wall biogenesis; peptidoglycan biosynthesis. In terms of biological role, catalyzes the initial step of the lipid cycle reactions in the biosynthesis of the cell wall peptidoglycan: transfers peptidoglycan precursor phospho-MurNAc-pentapeptide from UDP-MurNAc-pentapeptide onto the lipid carrier undecaprenyl phosphate, yielding undecaprenyl-pyrophosphoryl-MurNAc-pentapeptide, known as lipid I. In Synechococcus sp. (strain RCC307), this protein is Phospho-N-acetylmuramoyl-pentapeptide-transferase.